The primary structure comprises 297 residues: MNLGTLVSETRNPQTMDLDALPTPELVKRFNEQDTLVAEAVKATLPDVARAVDAAAAALKSGGRIIYMGAGTSGRLGVLDASECPPTFGVPHGLVVGLIAGGPGALLKAVEGAEDCQQAGEDDLVALNLQEQDLVVGLAASGRTPYVIGGLRYARQSGCTTVAVSCNPDSPIAREANIAISPVVGPEALTGSTRLKSGTAQKMVLNMISTGAMVKFGKVYQNLMVDMKATNVKLVDRACRMVVEATGIGREEAEALLKQTDFEVKPAILMALTGLDAAAAREKLAAHQGFLRAALEH.

Residues 55–218 (AAAALKSGGR…STGAMVKFGK (164 aa)) enclose the SIS domain. E83 functions as the Proton donor in the catalytic mechanism. E114 is a catalytic residue.

This sequence belongs to the GCKR-like family. MurNAc-6-P etherase subfamily. Homodimer.

The enzyme catalyses N-acetyl-D-muramate 6-phosphate + H2O = N-acetyl-D-glucosamine 6-phosphate + (R)-lactate. It participates in amino-sugar metabolism; 1,6-anhydro-N-acetylmuramate degradation. It functions in the pathway amino-sugar metabolism; N-acetylmuramate degradation. Its pathway is cell wall biogenesis; peptidoglycan recycling. Specifically catalyzes the cleavage of the D-lactyl ether substituent of MurNAc 6-phosphate, producing GlcNAc 6-phosphate and D-lactate. Together with AnmK, is also required for the utilization of anhydro-N-acetylmuramic acid (anhMurNAc) either imported from the medium or derived from its own cell wall murein, and thus plays a role in cell wall recycling. This Salmonella paratyphi B (strain ATCC BAA-1250 / SPB7) protein is N-acetylmuramic acid 6-phosphate etherase.